We begin with the raw amino-acid sequence, 778 residues long: Ribonucleoside-diphosphate reductase large subunit (778 aa).

Substrate contacts are provided by residues Ser-177, 192 to 193 (SC), Gly-221, 419 to 423 (NLCIE), and 613 to 617 (PTATS). The cysteines at positions 193 and 439 are disulfide-linked. The active-site Proton acceptor is Asn-419. The active-site Cysteine radical intermediate is Cys-421. Catalysis depends on Glu-423, which acts as the Proton acceptor.

This sequence belongs to the ribonucleoside diphosphate reductase large chain family. As to quaternary structure, heterotetramer composed of a homodimer of the large subunit (R1) and a homodimer of the small subunit (R2). Larger multisubunit protein complex are also active, composed of (R1)n(R2)n.

The enzyme catalyses a 2'-deoxyribonucleoside 5'-diphosphate + [thioredoxin]-disulfide + H2O = a ribonucleoside 5'-diphosphate + [thioredoxin]-dithiol. Under complex allosteric control mediated by deoxynucleoside triphosphates and ATP binding. The type of nucleotide bound at the specificity site determines substrate preference. It seems probable that ATP makes the enzyme reduce CDP and UDP, dGTP favors ADP reduction and dTTP favors GDP reduction. Its function is as follows. Ribonucleoside-diphosphate reductase holoenzyme provides the precursors necessary for viral DNA synthesis. Allows virus growth in non-dividing cells. Catalyzes the biosynthesis of deoxyribonucleotides from the corresponding ribonucleotides. This African swine fever virus (isolate Tick/South Africa/Pretoriuskop Pr4/1996) (ASFV) protein is Ribonucleoside-diphosphate reductase large subunit.